We begin with the raw amino-acid sequence, 288 residues long: Ras-like protein 1 (288 aa).

Gly-11–Ser-18 is a binding site for GTP. Residues Tyr-33–Tyr-41 carry the Effector region motif. GTP is bound by residues Asp-58 to Gln-62 and Asn-117 to Asp-120. A disordered region spans residues Glu-176 to Val-288. Low complexity-rich tracts occupy residues Gln-178–Asn-216 and Pro-246–Lys-281. A lipid anchor (S-palmitoyl cysteine) is attached at Cys-284. Cys-285 is modified (cysteine methyl ester). Residue Cys-285 is the site of S-farnesyl cysteine attachment. A propeptide spans Val-286–Val-288 (removed in mature form).

This sequence belongs to the small GTPase superfamily. Ras family.

The protein resides in the cell membrane. The catalysed reaction is GTP + H2O = GDP + phosphate + H(+). With respect to regulation, alternates between an inactive form bound to GDP and an active form bound to GTP. Activated by a guanine nucleotide-exchange factor (GEF) and inactivated by a GTPase-activating protein (GAP). Required for the regulation of both a MAP kinase signaling pathway and a cAMP signaling pathway. The activation of these pathways contributes to the pathogenicity of the cells through the induction of the morphological transition from the yeast to the polarized filamentous form. The protein is Ras-like protein 1 (RAS1) of Candida albicans (strain WO-1) (Yeast).